The chain runs to 231 residues: Putative cobalt transport protein CbiM 1 (231 aa).

Helical transmembrane passes span 8-28 (LPLQ…AYGI), 41-61 (TLPL…LKMP), 74-94 (GLGA…IVLV), 97-117 (ALFL…SMGI), 138-158 (IVNV…ITSI), and 175-195 (FITF…IEGI).

This sequence belongs to the CbiM family. In terms of assembly, forms an energy-coupling factor (ECF) transporter complex composed of an ATP-binding protein (A component, CbiO), a transmembrane protein (T component, CbiQ) and 2 possible substrate-capture proteins (S components, CbiM and CbiN) of unknown stoichimetry.

It localises to the cell membrane. It functions in the pathway cofactor biosynthesis; adenosylcobalamin biosynthesis. In terms of biological role, part of the energy-coupling factor (ECF) transporter complex CbiMNOQ involved in cobalt import. This is Putative cobalt transport protein CbiM 1 from Methanosphaerula palustris (strain ATCC BAA-1556 / DSM 19958 / E1-9c).